Reading from the N-terminus, the 484-residue chain is tRNA-2-methylthio-N(6)-dimethylallyladenosine synthase (484 aa).

The region spanning 36 to 153 (GKLYIKTHGC…LPELIRARRE (118 aa)) is the MTTase N-terminal domain. [4Fe-4S] cluster-binding residues include Cys-45, Cys-82, Cys-116, Cys-190, Cys-194, and Cys-197. The region spanning 176-415 (RAEGPSAFVS…HISAHAASIS (240 aa)) is the Radical SAM core domain. The region spanning 416–479 (QSMVGSVQRV…SNSLRGRIQL (64 aa)) is the TRAM domain. Residues 428–450 (EGPSRRDPNELTGKSENMRPVNF) are disordered.

The protein belongs to the methylthiotransferase family. MiaB subfamily. Monomer. Requires [4Fe-4S] cluster as cofactor.

It localises to the cytoplasm. The enzyme catalyses N(6)-dimethylallyladenosine(37) in tRNA + (sulfur carrier)-SH + AH2 + 2 S-adenosyl-L-methionine = 2-methylsulfanyl-N(6)-dimethylallyladenosine(37) in tRNA + (sulfur carrier)-H + 5'-deoxyadenosine + L-methionine + A + S-adenosyl-L-homocysteine + 2 H(+). In terms of biological role, catalyzes the methylthiolation of N6-(dimethylallyl)adenosine (i(6)A), leading to the formation of 2-methylthio-N6-(dimethylallyl)adenosine (ms(2)i(6)A) at position 37 in tRNAs that read codons beginning with uridine. This chain is tRNA-2-methylthio-N(6)-dimethylallyladenosine synthase, found in Xanthomonas oryzae pv. oryzae (strain MAFF 311018).